The chain runs to 198 residues: Recombination protein RecR (198 aa).

A C4-type zinc finger spans residues 57–72 (CSVCGHITENDPCYIC). One can recognise a Toprim domain in the interval 80–175 (SVICVVEDDK…KVTRLAQGLS (96 aa)).

Belongs to the RecR family.

In terms of biological role, may play a role in DNA repair. It seems to be involved in an RecBC-independent recombinational process of DNA repair. It may act with RecF and RecO. The chain is Recombination protein RecR from Staphylococcus haemolyticus (strain JCSC1435).